A 175-amino-acid polypeptide reads, in one-letter code: Bifunctional protein PyrR (175 aa).

Residues 40–41, Arg-85, 102–110, Arg-135, and Val-159 each bind substrate; these read TR and DDVLYTGRT. Positions 98 to 110 match the PRPP-binding motif; it reads VVIIDDVLYTGRT.

This sequence belongs to the purine/pyrimidine phosphoribosyltransferase family. PyrR subfamily. Homodimer and homohexamer; in equilibrium.

The enzyme catalyses UMP + diphosphate = 5-phospho-alpha-D-ribose 1-diphosphate + uracil. In terms of biological role, regulates transcriptional attenuation of the pyrimidine nucleotide (pyr) operon by binding in a uridine-dependent manner to specific sites on pyr mRNA. This disrupts an antiterminator hairpin in the RNA and favors formation of a downstream transcription terminator, leading to a reduced expression of downstream genes. Also displays a weak uracil phosphoribosyltransferase activity which is not physiologically significant. The sequence is that of Bifunctional protein PyrR from Staphylococcus epidermidis (strain ATCC 35984 / DSM 28319 / BCRC 17069 / CCUG 31568 / BM 3577 / RP62A).